A 156-amino-acid polypeptide reads, in one-letter code: Small ribosomal subunit protein uS7 (156 aa).

This sequence belongs to the universal ribosomal protein uS7 family. As to quaternary structure, part of the 30S ribosomal subunit. Contacts proteins S9 and S11.

Its function is as follows. One of the primary rRNA binding proteins, it binds directly to 16S rRNA where it nucleates assembly of the head domain of the 30S subunit. Is located at the subunit interface close to the decoding center, probably blocks exit of the E-site tRNA. This Shigella dysenteriae serotype 1 (strain Sd197) protein is Small ribosomal subunit protein uS7.